Here is a 190-residue protein sequence, read N- to C-terminus: GTP cyclohydrolase 1 (190 aa).

Zn(2+) contacts are provided by C78, H81, and C150.

It belongs to the GTP cyclohydrolase I family. As to quaternary structure, toroid-shaped homodecamer, composed of two pentamers of five dimers.

The catalysed reaction is GTP + H2O = 7,8-dihydroneopterin 3'-triphosphate + formate + H(+). The protein operates within cofactor biosynthesis; 7,8-dihydroneopterin triphosphate biosynthesis; 7,8-dihydroneopterin triphosphate from GTP: step 1/1. K(+) ions moderately increases the Vmax, whereas UTP and Ca(2+) and Mg(2+) ions drastically increase the Km for GTP. This chain is GTP cyclohydrolase 1 (folE), found in Bacillus subtilis (strain 168).